A 968-amino-acid polypeptide reads, in one-letter code: RNA polymerase-associated protein RapA (968 aa).

One can recognise a Helicase ATP-binding domain in the interval 163–332 (EVGRRYAPRV…FARLRLLDPD (170 aa)). 176–183 (DEVGLGKT) is a binding site for ATP. Residues 278 to 281 (DEAH) carry the DEAH box motif. The region spanning 491-655 (RVDWLIEFLK…EFAEDLLNVL (165 aa)) is the Helicase C-terminal domain.

It belongs to the SNF2/RAD54 helicase family. RapA subfamily. In terms of assembly, interacts with the RNAP. Has a higher affinity for the core RNAP than for the holoenzyme. Its ATPase activity is stimulated by binding to RNAP.

In terms of biological role, transcription regulator that activates transcription by stimulating RNA polymerase (RNAP) recycling in case of stress conditions such as supercoiled DNA or high salt concentrations. Probably acts by releasing the RNAP, when it is trapped or immobilized on tightly supercoiled DNA. Does not activate transcription on linear DNA. Probably not involved in DNA repair. The sequence is that of RNA polymerase-associated protein RapA from Shewanella baltica (strain OS155 / ATCC BAA-1091).